Reading from the N-terminus, the 113-residue chain is ATP synthase epsilon chain (113 aa).

Belongs to the ATPase epsilon chain family. As to quaternary structure, F-type ATPases have 2 components, CF(1) - the catalytic core - and CF(0) - the membrane proton channel. CF(1) has five subunits: alpha(3), beta(3), gamma(1), delta(1), epsilon(1). CF(0) has three main subunits: a, b and c.

The protein resides in the cell membrane. In terms of biological role, produces ATP from ADP in the presence of a proton gradient across the membrane. The sequence is that of ATP synthase epsilon chain from Wolbachia pipientis subsp. Culex pipiens (strain wPip).